Reading from the N-terminus, the 230-residue chain is MKTIGLLGGMSWESTIPYYRLINEGIKQRLGGLHSAQVLLHSVDFHEIEECQRRGEWDKTGDILAEAALGLQRAGAEGIVLCTNTMHKVADAIESRCTLPFLHIADATGRAITGAGMTRVALLGTRYTMEQDFYRGRLTEQFSINCLIPEADERAKINQIIFEELCLGQFTEASRAYCAQVIARLAEQGAQGVIFGCTEIGLLVPEERSVLPVFDTAAIHAEDAVAFMLS.

Residues Met-10, Gln-52, and 83–85 (TNT) each bind substrate. The Proton donor role is filled by Thr-83. The Proton acceptor role is filled by Cys-197. 198-199 (TE) serves as a coordination point for substrate.

It belongs to the aspartate/glutamate racemases family.

The enzyme catalyses an L-alpha-amino acid = a D-alpha-amino acid. The catalysed reaction is L-homoserine = D-homoserine. Its function is as follows. Amino-acid racemase able to utilize a broad range of substrates. Highest activity is observed with L-homoserine and D-homoserine. Has tenfold lower activity against L-methionine, L-leucine, L-valine and L-histidine. Has low activity with L-norvaline, L-asparagine, D-methionine, L-aminobutyric acid, L-isoleucine, L-serine, L-norleucine, L-alanine, L-glutamine, LL-diaminopimelic acid and L-phenylalanine. Has no activity against ten L-amino acids (Thr, Glu, Asp, Arg, Lys, Tyr, Trp, Orn, Cit and Aad). D-amino acids might be used as components of peptidoglycan and/or be involved in peptidoglycan metabolism and remodeling. This Escherichia coli (strain K12) protein is Broad specificity amino-acid racemase YgeA (ygeA).